We begin with the raw amino-acid sequence, 94 residues long: Mitochondrial import receptor subunit TOM9-1 (94 aa).

Topologically, residues 1–48 (MAPKKIGAGKGDSSILAKISNYDIVSQGRRAACDAVYVSKKLLKSTGK) are cytoplasmic. The helical transmembrane segment at 49 to 66 (AAWIAGTTFLILAVPLIL) threads the bilayer. At 67–94 (ELEQDHRLGEIDFEQASLLGTPPVGAML) the chain is on the mitochondrial intermembrane side.

This sequence belongs to the Tom22 family. Forms part of the preprotein translocase complex of the outer mitochondrial membrane (TOM complex) which consists of at least 6 different proteins (TOM5, TOM6, TOM7, TOM20, TOM22/TOM9 and TOM40). In terms of tissue distribution, expressed in roots, flowers, young cotyledons and leaves.

It localises to the mitochondrion outer membrane. Functionally, central component of the receptor complex responsible for the recognition and translocation of cytosolically synthesized mitochondrial preproteins. Together with TOM20 functions as the transit peptide receptor at the surface of the mitochondrion outer membrane and facilitates the movement of preproteins into the translocation pore. The chain is Mitochondrial import receptor subunit TOM9-1 (TOM9-1) from Arabidopsis thaliana (Mouse-ear cress).